A 143-amino-acid chain; its full sequence is Actin-depolymerizing factor 5 (143 aa).

An ADF-H domain is found at 11-143 (GMRVTDECTS…GFDIIQDRAK (133 aa)).

It belongs to the actin-binding proteins ADF family. Expressed exclusively in root tip meristem.

It is found in the cytoplasm. The protein resides in the cytoskeleton. Actin-depolymerizing protein. Severs actin filaments (F-actin) and binds to actin monomers. This chain is Actin-depolymerizing factor 5 (ADF5), found in Arabidopsis thaliana (Mouse-ear cress).